Reading from the N-terminus, the 89-residue chain is UPF0250 protein Bphyt_0500 (89 aa).

Belongs to the UPF0250 family.

In Paraburkholderia phytofirmans (strain DSM 17436 / LMG 22146 / PsJN) (Burkholderia phytofirmans), this protein is UPF0250 protein Bphyt_0500.